The following is a 273-amino-acid chain: GATA-type zinc finger protein 1 (273 aa).

Disordered stretches follow at residues 99–143 (RDSK…ERVD) and 172–201 (SSRS…AGSE). Residues 208–232 (CASCRTQRTPLWRDAEDGTPLCNAC) form a GATA-type zinc finger.

It is found in the nucleus. In terms of biological role, transcriptional regulator that plays a key role in germ cell development. Determines the oogenic fate by activating key genes for the oogenic program and meiotic prophase entry. Acts downstream of bone morphogenetic protein (BMP) by regulating expression of genes required for the oogenic programs, which are repressed by Polycomb activities in sexually uncommitted germ cells. Regulates expression of STRA8, a central downstream effector for the meiotic program. Acts independently of retinoic acid (RA). In males, not required for germ-cell sex determination, but required to allow the spermatogonia to efficiently accomplish the meiotic prophase. The sequence is that of GATA-type zinc finger protein 1 from Homo sapiens (Human).